The chain runs to 436 residues: Immediate-early phosphoprotein 57 (436 aa).

The segment at 71–140 is disordered; that stretch reads VPKRERSKTP…TPSNQNPLTE (70 aa). The span at 104–119 shows a compositional bias: low complexity; it reads QRPAPSARSRRPQPYS. Polar residues predominate over residues 127 to 138; sequence KPQSTPSNQNPL.

This sequence belongs to the herpesviridae UL69 family.

It is found in the host nucleus. It localises to the host cytoplasm. Acts at a post-transcriptional level to regulate viral gene expression. In Alcelaphine herpesvirus 1 (strain C500) (AlHV-1), this protein is Immediate-early phosphoprotein 57 (57).